Reading from the N-terminus, the 724-residue chain is N-alpha-acetyltransferase 35, NatC auxiliary subunit (724 aa).

Belongs to the MAK10 family. In terms of assembly, component of the N-terminal acetyltransferase C (NatC) complex.

It localises to the cytoplasm. Functionally, auxillary component of the N-terminal acetyltransferase C (NatC) complex which catalyzes acetylation of N-terminal methionine residues. N-terminal acetylation protects proteins from ubiquitination and degradation by the N-end rule pathway. Regulates cell proliferation during embryonic development. This Danio rerio (Zebrafish) protein is N-alpha-acetyltransferase 35, NatC auxiliary subunit (naa35).